A 470-amino-acid chain; its full sequence is Ribulose bisphosphate carboxylase large chain (470 aa).

Substrate is bound by residues Asn-115 and Thr-165. Lys-167 serves as the catalytic Proton acceptor. Lys-169 provides a ligand contact to substrate. Residues Lys-193, Asp-195, and Glu-196 each contribute to the Mg(2+) site. Residue Lys-193 is modified to N6-carboxylysine. His-286 (proton acceptor) is an active-site residue. Substrate is bound by residues Arg-287, His-319, and Ser-371.

This sequence belongs to the RuBisCO large chain family. Type I subfamily. In terms of assembly, heterohexadecamer of 8 large chains and 8 small chains. Requires Mg(2+) as cofactor.

Its subcellular location is the carboxysome. The catalysed reaction is 2 (2R)-3-phosphoglycerate + 2 H(+) = D-ribulose 1,5-bisphosphate + CO2 + H2O. The enzyme catalyses D-ribulose 1,5-bisphosphate + O2 = 2-phosphoglycolate + (2R)-3-phosphoglycerate + 2 H(+). In terms of biological role, ruBisCO catalyzes two reactions: the carboxylation of D-ribulose 1,5-bisphosphate, the primary event in carbon dioxide fixation, as well as the oxidative fragmentation of the pentose substrate in the photorespiration process. Both reactions occur simultaneously and in competition at the same active site. The chain is Ribulose bisphosphate carboxylase large chain from Prochlorococcus marinus (strain SARG / CCMP1375 / SS120).